A 1183-amino-acid chain; its full sequence is MAGQVVQYGRHRKRRNYARISEVLELPNLIEIQTKSYDWFLKEGLLEMFRDISPIEDFTGNLSLEFVDYRLGEPKYDLEESKNRDATYAAPLRVKVRLIIKETGEVKEQEVFMGDFPLMTDTGTFVINGAERVIVSQLVRSPSVYFNEKIDKNGRENYDATIIPNRGAWLEYETDAKDVVYVRIDRTRKLPLTVLLRALGFSTDQEIVDLLGDSEYLRNTLEKDGTENTEQALLEIYERLRPGEPPTVENAKSLLYSRFFDPKRYDLASVGRYKANKKLHLKHRLFNQKLAEPIVNSETGEIVVDEGTVLDRRKLDEIMDVLETNANSEVFELEGSVIDEPVEIQSIKVYVPNDEEGRTTTVIGNALPDSEVKCITPADIVASMSYFFNLLNGIGYTDDIDHLGNRRLRSVGELLQNQFRIGLSRMERVVRERMSIQDTDSITPQQLINIRPVIASIKEFFGSSQLSQFMDQANPLAELTHKRRLSALGPGGLTRERAQMEVRDVHYSHYGRMCPIETPEGPNIGLINSLSSYARVNEFGFIETPYRKVDLDTNSITDQIDYLTADEEDSYVVAQANSRLDENGRFLDDEVVCRFRGNNTVMAKEKMDYMDVSPKQVVSAATACIPFLENDDSNRALMGANMQRQAVPLMNPEAPFVGTGMEHVAARDSGAAITAKHRGRVEHVESNEILVRRLVEENGTEHEGELDRYPLAKFKRSNSGTCYNQRPIVSIGDVVEYNEILADGPSMELGEMALGRNVVVGFMTWDGYNYEDAVIMSERLVKDDVYTSIHIEEYESEARDTKLGPEEITRDIPNVSESALKNLDDRGIVYVGAEVKDGDILVGKVTPKGVTELTAEERLLHAIFGEKAREVRDTSLRVPHGAGGIVLDVKVFNREEGDDTLSPGVNQLVRVYIVQKRKIHVGDKMCGRHGNKGVISKIVPEEDMPYLPDGRPIDIMLNPLGVPSRMNIGQVLELHLGMAAKNLGIHVASPVFDGANDDDVWSTIEEAGMARDGKTVLYDGRTGEPFDNRISVGVMYMLKLAHMVDDKLHARSTGPYSLVTQQPLGGKAQFGGQRFGEMEVWALEAYGAAYTLQEILTYKSDDTVGRVKTYESIVKGENISRPSVPESFRVLMKELQSLGLDVKVMDEHDNEIEMADVDDEDAAERKVDLQQKSAPESQKETTD.

Positions 1151–1162 (EIEMADVDDEDA) are enriched in acidic residues. The disordered stretch occupies residues 1151 to 1183 (EIEMADVDDEDAAERKVDLQQKSAPESQKETTD).

This sequence belongs to the RNA polymerase beta chain family. The RNAP catalytic core consists of 2 alpha, 1 beta, 1 beta' and 1 omega subunit. When a sigma factor is associated with the core the holoenzyme is formed, which can initiate transcription.

The catalysed reaction is RNA(n) + a ribonucleoside 5'-triphosphate = RNA(n+1) + diphosphate. In terms of biological role, DNA-dependent RNA polymerase catalyzes the transcription of DNA into RNA using the four ribonucleoside triphosphates as substrates. This Staphylococcus epidermidis (strain ATCC 12228 / FDA PCI 1200) protein is DNA-directed RNA polymerase subunit beta.